The following is a 94-amino-acid chain: Co-chaperonin GroES (94 aa).

It belongs to the GroES chaperonin family. Heptamer of 7 subunits arranged in a ring. Interacts with the chaperonin GroEL.

The protein localises to the cytoplasm. Together with the chaperonin GroEL, plays an essential role in assisting protein folding. The GroEL-GroES system forms a nano-cage that allows encapsulation of the non-native substrate proteins and provides a physical environment optimized to promote and accelerate protein folding. GroES binds to the apical surface of the GroEL ring, thereby capping the opening of the GroEL channel. This is Co-chaperonin GroES from Bacillus sp. (strain PS3).